A 433-amino-acid polypeptide reads, in one-letter code: Phosphomethylpyrimidine synthase 1 (433 aa).

Substrate-binding positions include N66, M94, Y123, H162, 184-186 (SRG), 225-228 (DALR), and E264. Residue H268 participates in Zn(2+) binding. Y291 contacts substrate. H332 lines the Zn(2+) pocket. Residues C408, C411, and C415 each coordinate [4Fe-4S] cluster.

It belongs to the ThiC family. It depends on [4Fe-4S] cluster as a cofactor.

It carries out the reaction 5-amino-1-(5-phospho-beta-D-ribosyl)imidazole + S-adenosyl-L-methionine = 4-amino-2-methyl-5-(phosphooxymethyl)pyrimidine + CO + 5'-deoxyadenosine + formate + L-methionine + 3 H(+). The protein operates within cofactor biosynthesis; thiamine diphosphate biosynthesis. Catalyzes the synthesis of the hydroxymethylpyrimidine phosphate (HMP-P) moiety of thiamine from aminoimidazole ribotide (AIR) in a radical S-adenosyl-L-methionine (SAM)-dependent reaction. In Saccharolobus solfataricus (strain ATCC 35092 / DSM 1617 / JCM 11322 / P2) (Sulfolobus solfataricus), this protein is Phosphomethylpyrimidine synthase 1.